We begin with the raw amino-acid sequence, 164 residues long: UPF0114 protein KPK_0696 (164 aa).

4 helical membrane-spanning segments follow: residues Leu15–Phe35, Leu53–Val73, Val109–Met126, and Leu136–Leu156.

This sequence belongs to the UPF0114 family.

It localises to the cell membrane. The sequence is that of UPF0114 protein KPK_0696 from Klebsiella pneumoniae (strain 342).